A 436-amino-acid chain; its full sequence is Mannan endo-1,4-beta-mannosidase F (436 aa).

Residues 1–18 form the signal peptide; the sequence is MRSLSSVALLSAIGAASA. Residues 19–54 enclose the CBM1 domain; sequence QAGPWGQCAGISHTGPTTCESGWSCVYLNDWYSQCQ. The segment at 60-88 is disordered; that stretch reads SSSTTVSSTKQPSSTVAAPSSTTSAHTLP. Residues 79 to 113 form a ser-rich linker region; sequence SSTTSAHTLPTGSGSFAKTDGLKFNIDGKTKYFAG. Residues 114–436 form a catalytic region; the sequence is TNAYWLPFLT…CAVIDHISQI (323 aa). Residues tryptophan 146 and asparagine 260 each coordinate substrate. Residue glutamate 261 is the Proton donor of the active site. Tyrosine 336 is a substrate binding site. The Nucleophile role is filled by glutamate 370. Tryptophan 400 lines the substrate pocket.

The protein belongs to the glycosyl hydrolase 5 (cellulase A) family.

The protein resides in the secreted. The enzyme catalyses Random hydrolysis of (1-&gt;4)-beta-D-mannosidic linkages in mannans, galactomannans and glucomannans.. Endo-1,4-mannanase, a crucial enzyme for depolymerization of seed galactomannans and wood galactoglucomannans. The sequence is that of Mannan endo-1,4-beta-mannosidase F (manF) from Aspergillus clavatus (strain ATCC 1007 / CBS 513.65 / DSM 816 / NCTC 3887 / NRRL 1 / QM 1276 / 107).